The primary structure comprises 177 residues: Large ribosomal subunit protein uL10 (177 aa).

It belongs to the universal ribosomal protein uL10 family. In terms of assembly, part of the ribosomal stalk of the 50S ribosomal subunit. The N-terminus interacts with L11 and the large rRNA to form the base of the stalk. The C-terminus forms an elongated spine to which L12 dimers bind in a sequential fashion forming a multimeric L10(L12)X complex.

Functionally, forms part of the ribosomal stalk, playing a central role in the interaction of the ribosome with GTP-bound translation factors. The chain is Large ribosomal subunit protein uL10 from Xanthomonas campestris pv. campestris (strain 8004).